Consider the following 125-residue polypeptide: Small ribosomal subunit protein bS6 (125 aa).

The disordered stretch occupies residues 96-125 (VTAPSPMMREEKAKSAPQPAEEAKETTLAT). Residues 116 to 125 (EEAKETTLAT) are compositionally biased toward basic and acidic residues.

It belongs to the bacterial ribosomal protein bS6 family.

In terms of biological role, binds together with bS18 to 16S ribosomal RNA. This Nitrosospira multiformis (strain ATCC 25196 / NCIMB 11849 / C 71) protein is Small ribosomal subunit protein bS6.